The primary structure comprises 42 residues: uncharacterized protein (42 aa).

This is an uncharacterized protein from Treponema pallidum (strain Nichols).